The sequence spans 352 residues: Protein-glutamate methylesterase/protein-glutamine glutaminase 2 (352 aa).

The 116-residue stretch at 1 to 116 (MVVDDSAVVR…KQFLTDSADE (116 aa)) folds into the Response regulatory domain. 4-aspartylphosphate is present on Asp-50. Residues 162–352 (AQTTERIVAI…MAREIVTQLQ (191 aa)) enclose the CheB-type methylesterase domain. Residues Ser-174, His-200, and Asp-296 contribute to the active site.

The protein belongs to the CheB family. Phosphorylated by CheA. Phosphorylation of the N-terminal regulatory domain activates the methylesterase activity.

Its subcellular location is the cytoplasm. The enzyme catalyses [protein]-L-glutamate 5-O-methyl ester + H2O = L-glutamyl-[protein] + methanol + H(+). The catalysed reaction is L-glutaminyl-[protein] + H2O = L-glutamyl-[protein] + NH4(+). Involved in chemotaxis. Part of a chemotaxis signal transduction system that modulates chemotaxis in response to various stimuli. Catalyzes the demethylation of specific methylglutamate residues introduced into the chemoreceptors (methyl-accepting chemotaxis proteins or MCP) by CheR. Also mediates the irreversible deamidation of specific glutamine residues to glutamic acid. This Xanthomonas euvesicatoria pv. vesicatoria (strain 85-10) (Xanthomonas campestris pv. vesicatoria) protein is Protein-glutamate methylesterase/protein-glutamine glutaminase 2.